Reading from the N-terminus, the 493-residue chain is MRIHSPYPASWALAQRIGYLYSEGEIIYLADTPFERLLDIQRQVGQCQTMTSLSQADFEARLEAVFHQNTGESQQIAQDIDQSVDLLSLSEEMPANEDLLNEDSAAPVIRLINAILSEAIKETASDIHIETYEKTMSIRFRIDGVLRTILQPNKKLAALLISRIKVMARLDIAEKRIPQDGRISLRIGRRNIDVRVSTLPSIYGERAVLRLLDKNSLQLSLNNLGMTAADKQDLENLIQLPHGIILVTGPTGSGKSTTLYAILSALNTPGRNILTVEDPVEYELEGIGQTQVNTRVDMSFARGLRAILRQDPDVVMVGEIRDTETAQIAVQASLTGHLVLSTLHTNSASGAVTRLRDMGVESFLLSSSLAGIIAQRLVRRLCPQCRQFTPVSPQQAQMFKYHQLAVTTIGTPVGCPHCHQSGYQGRMAIHEMMVVTPELRAAIHENVDEQALERLVRQQHKALIKNGLQKVISGDTSWDEVMRVASATLESEA.

Gly-249–Ser-256 serves as a coordination point for ATP. Positions 382, 385, 415, and 418 each coordinate Zn(2+).

It belongs to the GSP E family. In terms of assembly, forms homooligomers; most probably hexamers. Interacts with GspL. It depends on Zn(2+) as a cofactor.

It localises to the cell inner membrane. The catalysed reaction is ATP + H2O + cellular proteinSide 1 = ADP + phosphate + cellular proteinSide 2.. Functionally, ATPase component of the type II secretion system required for the energy-dependent secretion of extracellular factors such as proteases and toxins from the periplasm. Acts as a molecular motor to provide the energy that is required for assembly of the pseudopilus and the extrusion of substrates generated in the cytoplasm. The sequence is that of Putative type II secretion system protein E (gspE) from Escherichia coli (strain K12).